The following is a 234-amino-acid chain: Demethylmenaquinone methyltransferase (234 aa).

S-adenosyl-L-methionine-binding positions include T58, D79, and 106–107 (NA).

Belongs to the class I-like SAM-binding methyltransferase superfamily. MenG/UbiE family.

It carries out the reaction a 2-demethylmenaquinol + S-adenosyl-L-methionine = a menaquinol + S-adenosyl-L-homocysteine + H(+). Its pathway is quinol/quinone metabolism; menaquinone biosynthesis; menaquinol from 1,4-dihydroxy-2-naphthoate: step 2/2. Functionally, methyltransferase required for the conversion of demethylmenaquinol (DMKH2) to menaquinol (MKH2). The chain is Demethylmenaquinone methyltransferase from Geobacillus kaustophilus (strain HTA426).